Consider the following 382-residue polypeptide: D-galactonate dehydratase (382 aa).

Asp-183 is a Mg(2+) binding site. Residue His-185 is the Proton donor of the active site. Residues Glu-209 and Glu-235 each contribute to the Mg(2+) site. His-285 functions as the Proton acceptor in the catalytic mechanism.

Belongs to the mandelate racemase/muconate lactonizing enzyme family. GalD subfamily. Requires Mg(2+) as cofactor.

It carries out the reaction D-galactonate = 2-dehydro-3-deoxy-D-galactonate + H2O. The protein operates within carbohydrate acid metabolism; D-galactonate degradation; D-glyceraldehyde 3-phosphate and pyruvate from D-galactonate: step 1/3. In terms of biological role, catalyzes the dehydration of D-galactonate to 2-keto-3-deoxy-D-galactonate. The chain is D-galactonate dehydratase from Variovorax paradoxus (strain S110).